The chain runs to 456 residues: Neurexin-3-beta (456 aa).

An N-terminal signal peptide occupies residues 1–35; the sequence is MHLRIHARRNPPRRPAWTLGIWSLFWGCIVSSVWS. At 36 to 381 the chain is on the extracellular side; the sequence is SSNVASSSSS…EVIRESSSTT (346 aa). Residues 41–63 are disordered; sequence SSSSSPGSHSQHEHHFHGSKHHS. The span at 52–63 shows a compositional bias: basic residues; that stretch reads HEHHFHGSKHHS. Residues 82-282 form the Laminin G-like domain; sequence ATYIFGKSGG…NPNIKINGSV (201 aa). Asp-134 and Ile-151 together coordinate Ca(2+). N-linked (GlcNAc...) asparagine glycosylation occurs at Asn-181. Residues Ile-233 and Asn-235 each coordinate Ca(2+). 2 N-linked (GlcNAc...) asparagine glycosylation sites follow: Asn-279 and Asn-323. Residues 316 to 340 form a disordered region; the sequence is ATTTTRKNRSTASIQPTSDDLVSSA. Over residues 325–340 the composition is skewed to polar residues; that stretch reads STASIQPTSDDLVSSA. The O-linked (Xyl...) (heparan sulfate) serine glycan is linked to Ser-339. The chain crosses the membrane as a helical span at residues 382 to 402; it reads GMVVGIVAAAALCILILLYAM. The Cytoplasmic portion of the chain corresponds to 403-456; sequence YKYRNRDEGSYQVDETRNYISNSAQSNGTLLKEKPPSSKGGHKKQKNKDKEYYV. Residues 424 to 456 are disordered; that stretch reads NSAQSNGTLLKEKPPSSKGGHKKQKNKDKEYYV.

This sequence belongs to the neurexin family. Weakly interacts with CBLN1 and CBLN2. Very weak binding, if any, to CBLN4. Specific isoforms bind neuroligins NLGN1, NLGN2 and NLGN3. Interacts with CLSTN3. Processed by alpha-secretase leading to the formation of an extracellular soluble protein as well as a C-terminal membrane-embedded fragment (CTF). Proteolysis of these CTFs by gamma-secretase releases intracellular domains (ICDs) and extracellular peptides. In terms of processing, O-glycosylated; contains heparan sulfate. Heparan sulfate attachment is required for synapse development by mediating interactions with neuroligins.

The protein localises to the presynaptic cell membrane. It is found in the secreted. Its function is as follows. Neuronal cell surface protein that may be involved in cell recognition and cell adhesion. May mediate intracellular signaling. Functions as part of a trans-synaptic complex by binding to cerebellins and postsynaptic GRID1. This interaction helps regulate the activity of NMDA and AMPA receptors at hippocampal synapses without affecting synapse formation. NRXN3B-CBLN2-GRID1 complex transduce presynaptic signals into postsynaptic AMPAR response. This is Neurexin-3-beta (NRXN3) from Bos taurus (Bovine).